A 429-amino-acid chain; its full sequence is Serine carboxypeptidase-like (429 aa).

Disulfide bonds link Cys58-Cys298, Cys226-Cys241, and Cys264-Cys269. Asn76 carries N-linked (GlcNAc...) asparagine glycosylation. Residue Ser148 is part of the active site. The active site involves Asp336. Cys339 provides a ligand contact to substrate. Residue His393 is part of the active site. 2 N-linked (GlcNAc...) asparagine glycosylation sites follow: Asn414 and Asn417.

Belongs to the peptidase S10 family. As to expression, abundant in germinated embryos composed of leaf, root, and scutellum.

This chain is Serine carboxypeptidase-like (CBP31), found in Oryza sativa subsp. japonica (Rice).